A 419-amino-acid polypeptide reads, in one-letter code: 1,4-beta-D-glucan cellobiohydrolase CEL6B (419 aa).

The N-terminal stretch at 1–47 (MGESFLLLQPASPALSPTPSSLLLGPTITMRADVLIAALATGALVAA) is a signal peptide. 2 residues coordinate substrate: tryptophan 111 and serine 113. Catalysis depends on proton donor residues aspartate 152 and aspartate 199. Position 247 (tryptophan 247) interacts with substrate. A glycan (N-linked (GlcNAc...) asparagine) is linked at asparagine 284. Asparagine 287 contacts substrate. The N-linked (GlcNAc...) asparagine glycan is linked to asparagine 298. Tryptophan 347 contacts substrate. A glycan (N-linked (GlcNAc...) asparagine) is linked at asparagine 364. Substrate contacts are provided by lysine 375 and glutamate 379.

The protein belongs to the glycosyl hydrolase 6 (cellulase B) family. In terms of processing, both N- and O-glycosylated.

It localises to the secreted. The catalysed reaction is Hydrolysis of (1-&gt;4)-beta-D-glucosidic linkages in cellulose and cellotetraose, releasing cellobiose from the non-reducing ends of the chains.. In terms of biological role, exoglucanase that plays an important function in biomass degradation by catalyzing the hydrolysis of the non-reducing end beta-1,4-glucosidic linkages in cellulose and cellotetraose to release cellobiose. Hydrolyzes crystalline and amorphous cellulose but is inactive on hydroxyethyl cellulose, mannan, galactomannan, xyloglucan, arabinoxylan, arabinan, xylan, and pectin. This chain is 1,4-beta-D-glucan cellobiohydrolase CEL6B, found in Podospora anserina (strain S / ATCC MYA-4624 / DSM 980 / FGSC 10383) (Pleurage anserina).